A 624-amino-acid chain; its full sequence is Coagulation factor XI (624 aa).

Residues 1–18 form the signal peptide; sequence MTSLHQVLYFIFFASVSS. Apple domains are found at residues 20 to 103, 110 to 193, 200 to 283, and 291 to 376; these read CVTK…FKQC, CSKD…LKSC, CIRD…LQHC, and CHPS…LRLC. 17 cysteine pairs are disulfide-bonded: Cys20/Cys103, Cys46/Cys76, Cys50/Cys56, Cys110/Cys193, Cys136/Cys165, Cys140/Cys146, Cys200/Cys283, Cys226/Cys255, Cys230/Cys236, Cys291/Cys376, Cys317/Cys348, Cys321/Cys327, Cys382/Cys499, Cys415/Cys431, Cys513/Cys580, Cys544/Cys559, and Cys570/Cys598. Asn90 and Asn126 each carry an N-linked (GlcNAc...) asparagine glycan. N-linked (GlcNAc...) asparagine glycosylation occurs at Asn297. The 233-residue stretch at 390 to 622 folds into the Peptidase S1 domain; sequence VVGGAASVHG…YVDWILEKTQ (233 aa). The active-site Charge relay system is His430. An N-linked (GlcNAc...) asparagine glycan is attached at Asn449. Asp479 (charge relay system) is an active-site residue. Asn490 is a glycosylation site (N-linked (GlcNAc...) asparagine). 547–550 contacts heparin; it reads RYRR. Catalysis depends on Ser574, which acts as the Charge relay system.

The protein belongs to the peptidase S1 family. Plasma kallikrein subfamily. As to quaternary structure, homodimer; disulfide-linked. After activation the heavy and light chains are also linked by a disulfide bond. Interacts (activated) with F9 (inactive and activated) in calcium-dependent manner. Forms a heterodimer with SERPINA5. Post-translationally, activated by factor XIIa (or XII), which cleaves each polypeptide after Arg-389 into the light chain, which contains the active site, and the heavy chain, which associates with high molecular weight (HMW) kininogen. Activated by F12 (activated); the presence of negatively charged surfaces accelerates activation. Activated by F2 (thrombin); the presence of negatively charged surfaces, such as polyphosphate and dextran sulfate, strongly accelerates activation. Autoactivated; the presence of negatively charged surfaces, such as polyphosphate and dextran sulfate, accelerates autoactivation and autolysis. In terms of processing, N-glycosylated on both chains. N-glycosylated sites mainly consist of nonfucosylated sialylated biantennary (in high abundance) and/or triantennary (in low abundance) complex structures.

The protein localises to the secreted. It catalyses the reaction Selective cleavage of Arg-|-Ala and Arg-|-Val bonds in factor IX to form factor IXa.. Its activity is regulated as follows. Inhibited by SERPINA5. Factor XI triggers the middle phase of the intrinsic pathway of blood coagulation by activating factor IX. The protein is Coagulation factor XI (F11) of Mus musculus (Mouse).